Reading from the N-terminus, the 571-residue chain is Urease subunit alpha (571 aa).

Residues 133 to 571 (AGIDTHIHFI…VALNQRYFFS (439 aa)) form the Urease domain. The Ni(2+) site is built by His-138, His-140, and Lys-221. At Lys-221 the chain carries N6-carboxylysine. His-223 lines the substrate pocket. Ni(2+) is bound by residues His-250 and His-276. His-324 functions as the Proton donor in the catalytic mechanism. Position 364 (Asp-364) interacts with Ni(2+).

This sequence belongs to the metallo-dependent hydrolases superfamily. Urease alpha subunit family. In terms of assembly, heterotrimer of UreA (gamma), UreB (beta) and UreC (alpha) subunits. Three heterotrimers associate to form the active enzyme. It depends on Ni cation as a cofactor. Post-translationally, carboxylation allows a single lysine to coordinate two nickel ions.

The protein resides in the cytoplasm. The enzyme catalyses urea + 2 H2O + H(+) = hydrogencarbonate + 2 NH4(+). It participates in nitrogen metabolism; urea degradation; CO(2) and NH(3) from urea (urease route): step 1/1. In Photorhabdus laumondii subsp. laumondii (strain DSM 15139 / CIP 105565 / TT01) (Photorhabdus luminescens subsp. laumondii), this protein is Urease subunit alpha.